We begin with the raw amino-acid sequence, 263 residues long: RNA exonuclease 4 (263 aa).

The segment at 1 to 27 is disordered; it reads MRLSSNWSKLQDGVTKKAGKKRIDKKP. Residues 17 to 27 are compositionally biased toward basic residues; that stretch reads KAGKKRIDKKP. The region spanning 95 to 247 is the Exonuclease domain; that stretch reads YIAMDCEFVG…EDARATMLIY (153 aa).

Belongs to the REXO4 family.

It localises to the nucleus. Functionally, exoribonuclease involved in ribosome biosynthesis. Involved in the processing of ITS1, the internal transcribed spacer localized between the 18S and 5.8S rRNAs. In Candida glabrata (strain ATCC 2001 / BCRC 20586 / JCM 3761 / NBRC 0622 / NRRL Y-65 / CBS 138) (Yeast), this protein is RNA exonuclease 4 (REX4).